Reading from the N-terminus, the 84-residue chain is Cell division topological specificity factor (84 aa).

This sequence belongs to the MinE family.

Its function is as follows. Prevents the cell division inhibition by proteins MinC and MinD at internal division sites while permitting inhibition at polar sites. This ensures cell division at the proper site by restricting the formation of a division septum at the midpoint of the long axis of the cell. This Pseudomonas entomophila (strain L48) protein is Cell division topological specificity factor.